We begin with the raw amino-acid sequence, 216 residues long: Octanoyltransferase (216 aa).

The BPL/LPL catalytic domain occupies 32-207; sequence ENSPDELWLV…TFSQLLGYEH (176 aa). Residues 71–78, 138–140, and 151–153 each bind substrate; these read RGGQVTYH, SLG, and GLA. Cysteine 169 functions as the Acyl-thioester intermediate in the catalytic mechanism.

Belongs to the LipB family.

Its subcellular location is the cytoplasm. The catalysed reaction is octanoyl-[ACP] + L-lysyl-[protein] = N(6)-octanoyl-L-lysyl-[protein] + holo-[ACP] + H(+). It participates in protein modification; protein lipoylation via endogenous pathway; protein N(6)-(lipoyl)lysine from octanoyl-[acyl-carrier-protein]: step 1/2. In terms of biological role, catalyzes the transfer of endogenously produced octanoic acid from octanoyl-acyl-carrier-protein onto the lipoyl domains of lipoate-dependent enzymes. Lipoyl-ACP can also act as a substrate although octanoyl-ACP is likely to be the physiological substrate. This is Octanoyltransferase from Shewanella amazonensis (strain ATCC BAA-1098 / SB2B).